The following is a 208-amino-acid chain: Uracil phosphoribosyltransferase (208 aa).

Residues arginine 78, arginine 103, and 130 to 138 (DPMLATGGT) contribute to the 5-phospho-alpha-D-ribose 1-diphosphate site. Residues isoleucine 193 and 198–200 (GDA) each bind uracil. Aspartate 199 provides a ligand contact to 5-phospho-alpha-D-ribose 1-diphosphate.

The protein belongs to the UPRTase family. Requires Mg(2+) as cofactor.

It catalyses the reaction UMP + diphosphate = 5-phospho-alpha-D-ribose 1-diphosphate + uracil. Its pathway is pyrimidine metabolism; UMP biosynthesis via salvage pathway; UMP from uracil: step 1/1. Its activity is regulated as follows. Allosterically activated by GTP. In terms of biological role, catalyzes the conversion of uracil and 5-phospho-alpha-D-ribose 1-diphosphate (PRPP) to UMP and diphosphate. This Nitratidesulfovibrio vulgaris (strain DSM 19637 / Miyazaki F) (Desulfovibrio vulgaris) protein is Uracil phosphoribosyltransferase.